Reading from the N-terminus, the 87-residue chain is UPF0250 protein BUsg_472 (87 aa).

The protein belongs to the UPF0250 family.

The polypeptide is UPF0250 protein BUsg_472 (Buchnera aphidicola subsp. Schizaphis graminum (strain Sg)).